The sequence spans 369 residues: Biglycan (369 aa).

The signal sequence occupies residues 1-16; it reads MRPLWLLTLLLALSQA. The propeptide occupies 17–37; sequence LPFEQKGFWDFTLDDGLLMMN. Serine 42 and serine 48 each carry an O-linked (Xyl...) (glycosaminoglycan) serine glycan. Cystine bridges form between cysteine 64-cysteine 70 and cysteine 68-cysteine 77. LRR repeat units follow at residues 83–103, 104–127, 128–151, 152–172, 173–196, 197–221, 222–242, 243–266, 267–290, 291–313, 314–343, and 344–369; these read KTVP…NNDI, SELR…NNKI, SKIH…KNHL, VEIP…DNRI, RKVP…GNPL, ENSG…EAKL, TGIP…HNKI, QAIE…HNQI, RMIE…NNKL, SRVP…SNNI, TKVG…NNPV, and PYWE…NYKK. Asparagine 271 and asparagine 312 each carry an N-linked (GlcNAc...) asparagine glycan. Residues cysteine 322 and cysteine 355 are joined by a disulfide bond.

Belongs to the small leucine-rich proteoglycan (SLRP) family. SLRP class I subfamily. Homodimer. Forms a ternary complex with MFAP2 and ELN. In terms of processing, the two attached glycosaminoglycan chains can be either chondroitin sulfate or dermatan sulfate. In terms of tissue distribution, found in several connective tissues, especially in articular cartilages.

It localises to the secreted. The protein localises to the extracellular space. The protein resides in the extracellular matrix. May be involved in collagen fiber assembly. This is Biglycan (Bgn) from Rattus norvegicus (Rat).